We begin with the raw amino-acid sequence, 335 residues long: Holliday junction branch migration complex subunit RuvB (335 aa).

Positions 4–184 (ADRLVSAEVL…FGIVQRLEFY (181 aa)) are large ATPase domain (RuvB-L). Residues I23, R24, G65, K68, T69, T70, 131 to 133 (EDY), R174, Y184, and R221 each bind ATP. Residue T69 coordinates Mg(2+). The interval 185–255 (NVDDLQSIVS…IATRALDMLS (71 aa)) is small ATPAse domain (RuvB-S). The head domain (RuvB-H) stretch occupies residues 258 to 335 (AAGFDYLDRK…RHFGMVRNQE (78 aa)). Residues R294, R313, and R318 each coordinate DNA.

Belongs to the RuvB family. As to quaternary structure, homohexamer. Forms an RuvA(8)-RuvB(12)-Holliday junction (HJ) complex. HJ DNA is sandwiched between 2 RuvA tetramers; dsDNA enters through RuvA and exits via RuvB. An RuvB hexamer assembles on each DNA strand where it exits the tetramer. Each RuvB hexamer is contacted by two RuvA subunits (via domain III) on 2 adjacent RuvB subunits; this complex drives branch migration. In the full resolvosome a probable DNA-RuvA(4)-RuvB(12)-RuvC(2) complex forms which resolves the HJ.

Its subcellular location is the cytoplasm. It catalyses the reaction ATP + H2O = ADP + phosphate + H(+). The RuvA-RuvB-RuvC complex processes Holliday junction (HJ) DNA during genetic recombination and DNA repair, while the RuvA-RuvB complex plays an important role in the rescue of blocked DNA replication forks via replication fork reversal (RFR). RuvA specifically binds to HJ cruciform DNA, conferring on it an open structure. The RuvB hexamer acts as an ATP-dependent pump, pulling dsDNA into and through the RuvAB complex. RuvB forms 2 homohexamers on either side of HJ DNA bound by 1 or 2 RuvA tetramers; 4 subunits per hexamer contact DNA at a time. Coordinated motions by a converter formed by DNA-disengaged RuvB subunits stimulates ATP hydrolysis and nucleotide exchange. Immobilization of the converter enables RuvB to convert the ATP-contained energy into a lever motion, pulling 2 nucleotides of DNA out of the RuvA tetramer per ATP hydrolyzed, thus driving DNA branch migration. The RuvB motors rotate together with the DNA substrate, which together with the progressing nucleotide cycle form the mechanistic basis for DNA recombination by continuous HJ branch migration. Branch migration allows RuvC to scan DNA until it finds its consensus sequence, where it cleaves and resolves cruciform DNA. In Photorhabdus laumondii subsp. laumondii (strain DSM 15139 / CIP 105565 / TT01) (Photorhabdus luminescens subsp. laumondii), this protein is Holliday junction branch migration complex subunit RuvB.